The sequence spans 141 residues: HTH-type transcriptional repressor NsrR (141 aa).

The HTH rrf2-type domain maps to 2-129 (QLTSFTDYGL…DSHTLADMVE (128 aa)). The segment at residues 28-51 (ISEVTEVYGVSRNHMVKIINQLSR) is a DNA-binding region (H-T-H motif). Residues Cys-91, Cys-96, and Cys-102 each contribute to the [2Fe-2S] cluster site.

The cofactor is [2Fe-2S] cluster.

Its function is as follows. Nitric oxide-sensitive repressor of genes involved in protecting the cell against nitrosative stress. May require iron for activity. This is HTH-type transcriptional repressor NsrR from Serratia proteamaculans (strain 568).